Consider the following 508-residue polypeptide: Vacuolar serine-type carboxypeptidase ATG42 (508 aa).

Positions 1–24 (MKYLNLVFVLQLLISIKYASFGRA) are cleaved as a signal peptide. 5 disulfide bridges follow: Cys132-Cys375, Cys267-Cys281, Cys291-Cys314, Cys298-Cys307, and Cys336-Cys345. Asn163 carries an N-linked (GlcNAc...) asparagine glycan. Ser219 is an active-site residue. Residue Asn242 is glycosylated (N-linked (GlcNAc...) asparagine). 2 N-linked (GlcNAc...) asparagine glycosylation sites follow: Asn339 and Asn371. Asp415 is an active-site residue. Cys418 lines the substrate pocket. Residue His474 is part of the active site. Met475 serves as a coordination point for substrate.

It belongs to the peptidase S10 family.

Its subcellular location is the vacuole lumen. It carries out the reaction Release of a C-terminal amino acid with broad specificity.. Its function is as follows. Vacuolar serine-type carboxypeptidase involved in vacuolar zymogen activation, breakdown of the autophagic body, and autophagosome-dependent protein synthesis. Plays a key role in phytochelatin (PC) synthesis from glutathione (GSH) by cleaving the Gly from GSH and form the PC-peptides of the structure (gamma-Glu-Cys)2-Gly. Also involved in resistance to xenobiotics via the degradation of glutathione-S-conjugates. The protein is Vacuolar serine-type carboxypeptidase ATG42 of Saccharomyces cerevisiae (strain ATCC 204508 / S288c) (Baker's yeast).